We begin with the raw amino-acid sequence, 275 residues long: Putative phosphoenolpyruvate synthase regulatory protein (275 aa).

157 to 164 is a binding site for ADP; the sequence is GVSRCGKT.

This sequence belongs to the pyruvate, phosphate/water dikinase regulatory protein family. PSRP subfamily.

It catalyses the reaction [pyruvate, water dikinase] + ADP = [pyruvate, water dikinase]-phosphate + AMP + H(+). The catalysed reaction is [pyruvate, water dikinase]-phosphate + phosphate + H(+) = [pyruvate, water dikinase] + diphosphate. Functionally, bifunctional serine/threonine kinase and phosphorylase involved in the regulation of the phosphoenolpyruvate synthase (PEPS) by catalyzing its phosphorylation/dephosphorylation. The chain is Putative phosphoenolpyruvate synthase regulatory protein from Bordetella pertussis (strain Tohama I / ATCC BAA-589 / NCTC 13251).